Consider the following 622-residue polypeptide: 1-deoxy-D-xylulose-5-phosphate synthase (622 aa).

Residues His80 and 121-123 (GHS) contribute to the thiamine diphosphate site. Residue Asp152 participates in Mg(2+) binding. Thiamine diphosphate is bound by residues 153–154 (GA), Asn181, Tyr288, and Glu370. Asn181 serves as a coordination point for Mg(2+).

This sequence belongs to the transketolase family. DXPS subfamily. Homodimer. Mg(2+) is required as a cofactor. Thiamine diphosphate serves as cofactor.

It catalyses the reaction D-glyceraldehyde 3-phosphate + pyruvate + H(+) = 1-deoxy-D-xylulose 5-phosphate + CO2. Its pathway is metabolic intermediate biosynthesis; 1-deoxy-D-xylulose 5-phosphate biosynthesis; 1-deoxy-D-xylulose 5-phosphate from D-glyceraldehyde 3-phosphate and pyruvate: step 1/1. In terms of biological role, catalyzes the acyloin condensation reaction between C atoms 2 and 3 of pyruvate and glyceraldehyde 3-phosphate to yield 1-deoxy-D-xylulose-5-phosphate (DXP). The polypeptide is 1-deoxy-D-xylulose-5-phosphate synthase (Shewanella baltica (strain OS185)).